Reading from the N-terminus, the 412-residue chain is uncharacterized protein (412 aa).

H49 contributes to the Zn(2+) binding site. The active-site Proton acceptor is the E52. Residues H53 and E129 each contribute to the Zn(2+) site.

This sequence belongs to the peptidase M16 family. Requires Zn(2+) as cofactor.

This is an uncharacterized protein from Rickettsia typhi (strain ATCC VR-144 / Wilmington).